A 268-amino-acid chain; its full sequence is Zinc finger protein SNAI2 (268 aa).

Residues 1-20 are SNAG domain; it reads MPRSFLVKKHFNASKKPNYS. Residues 80–117 form a disordered region; it reads SSSLGRVSPPPPSDTSSKDHSGSESPISDEEERLQSKL. C2H2-type zinc fingers lie at residues 128–150, 159–181, 185–207, and 213–235; these read FQCN…KQLH, FSCK…IRTH, CVCK…IRTH, and FSCP…LQTH. Residues 241 to 264 form a C2H2-type 5; atypical zinc finger; sequence YQCKNCSKTFSRMSLLHKHEESGC.

Belongs to the snail C2H2-type zinc-finger protein family. Interacts (via SNAG domain) with LIMD1 (via LIM domains), WTIP (via LIM domains) and AJUBA (via LIM domains). Interacts (via zinc fingers) with KPNA2, KPNB1, and TNPO1. May interact (via zinc fingers) with IPO7. Phosphorylated by GSK3B. Once phosphorylated, it becomes a target for ubiquitination. In terms of processing, ubiquitinated by the SCF(FBXO11) complex; ubiquitination requires previous GSK3B-mediated SNAI2 phosphorylation. As to expression, expressed in most adult human tissues, including spleen, thymus, prostate, testis, ovary, small intestine, colon, heart, brain, placenta, lung, liver, skeletal muscle, kidney and pancreas. Not detected in peripheral blood leukocyte. Expressed in the dermis and in all layers of the epidermis, with high levels of expression in the basal layers (at protein level). Expressed in osteoblasts (at protein level). Expressed in mesenchymal stem cells (at protein level). Expressed in breast tumor cells (at protein level).

It localises to the nucleus. The protein localises to the cytoplasm. Transcriptional repressor that modulates both activator-dependent and basal transcription. Involved in the generation and migration of neural crest cells. Plays a role in mediating RAF1-induced transcriptional repression of the TJ protein, occludin (OCLN) and subsequent oncogenic transformation of epithelial cells. Represses BRCA2 expression by binding to its E2-box-containing silencer and recruiting CTBP1 and HDAC1 in breast cells. In epidermal keratinocytes, binds to the E-box in ITGA3 promoter and represses its transcription. Involved in the regulation of ITGB1 and ITGB4 expression and cell adhesion and proliferation in epidermal keratinocytes. Binds to E-box2 domain of BSG and activates its expression during TGFB1-induced epithelial-mesenchymal transition (EMT) in hepatocytes. Represses E-Cadherin/CDH1 transcription via E-box elements. Involved in osteoblast maturation. Binds to RUNX2 and SOC9 promoters and may act as a positive and negative transcription regulator, respectively, in osteoblasts. Binds to CXCL12 promoter via E-box regions in mesenchymal stem cells and osteoblasts. Plays an essential role in TWIST1-induced EMT and its ability to promote invasion and metastasis. In Homo sapiens (Human), this protein is Zinc finger protein SNAI2 (SNAI2).